The sequence spans 116 residues: Protein Rev (116 aa).

A phosphoserine; by host CK2 mark is found at serine 5 and serine 8. The homomultimerization stretch occupies residues 18–26; sequence LIKFLYQSN. Residues 23–48 form a disordered region; the sequence is YQSNPPPSPEGTRQARRNRRRRWRAR. The short motif at 34 to 50 is the Nuclear localization signal and RNA-binding (RRE) element; it reads TRQARRNRRRRWRARQR. The span at 36–48 shows a compositional bias: basic residues; that stretch reads QARRNRRRRWRAR. A Nuclear export signal and binding to XPO1 motif is present at residues 73-84; sequence LQLPPLERLNLN. A disordered region spans residues 90–116; sequence GTSGTQGVGSPQIPVEPPAVLESGTEE. Serine 92 and serine 99 each carry phosphoserine; by host.

It belongs to the HIV-1 REV protein family. In terms of assembly, homomultimer; when bound to the RRE. Multimeric assembly is essential for activity and may involve XPO1. Binds to human KPNB1, XPO1, TNPO1, RANBP5 and IPO7. Interacts with the viral Integrase. Interacts with human KHDRBS1. Interacts with human NAP1; this interaction decreases Rev multimerization and stimulates its activity. Interacts with human DEAD-box helicases DDX3 and DDX24; these interactions may serve for viral RNA export to the cytoplasm and packaging, respectively. Interacts with human PSIP1; this interaction may inhibit HIV-1 DNA integration by promoting dissociation of the Integrase-LEDGF/p75 complex. Post-translationally, asymmetrically arginine dimethylated at one site by host PRMT6. Methylation impairs the RNA-binding activity and export of viral RNA from the nucleus to the cytoplasm. Phosphorylated by protein kinase CK2. Presence of, and maybe binding to the N-terminus of the regulatory beta subunit of CK2 is necessary for CK2-mediated Rev's phosphorylation.

Its subcellular location is the host nucleus. The protein resides in the host nucleolus. The protein localises to the host cytoplasm. Its function is as follows. Escorts unspliced or incompletely spliced viral pre-mRNAs (late transcripts) out of the nucleus of infected cells. These pre-mRNAs carry a recognition sequence called Rev responsive element (RRE) located in the env gene, that is not present in fully spliced viral mRNAs (early transcripts). This function is essential since most viral proteins are translated from unspliced or partially spliced pre-mRNAs which cannot exit the nucleus by the pathway used by fully processed cellular mRNAs. Rev itself is translated from a fully spliced mRNA that readily exits the nucleus. Rev's nuclear localization signal (NLS) binds directly to KPNB1/Importin beta-1 without previous binding to KPNA1/Importin alpha-1. KPNB1 binds to the GDP bound form of RAN (Ran-GDP) and targets Rev to the nucleus. In the nucleus, the conversion from Ran-GDP to Ran-GTP dissociates Rev from KPNB1 and allows Rev's binding to the RRE in viral pre-mRNAs. Rev multimerization on the RRE via cooperative assembly exposes its nuclear export signal (NES) to the surface. Rev can then form a complex with XPO1/CRM1 and Ran-GTP, leading to nuclear export of the complex. Conversion from Ran-GTP to Ran-GDP mediates dissociation of the Rev/RRE/XPO1/RAN complex, so that Rev can return to the nucleus for a subsequent round of export. Beside KPNB1, also seems to interact with TNPO1/Transportin-1, RANBP5/IPO5 and IPO7/RANBP7 for nuclear import. The nucleoporin-like HRB/RIP is an essential cofactor that probably indirectly interacts with Rev to release HIV RNAs from the perinuclear region to the cytoplasm. The chain is Protein Rev from Homo sapiens (Human).